The following is a 161-amino-acid chain: Phosphopantetheine adenylyltransferase (161 aa).

Ser-8 contacts substrate. ATP-binding positions include 8–9 (SF) and His-16. Lys-40, Thr-72, and Arg-86 together coordinate substrate. ATP contacts are provided by residues 87-89 (GLR), Glu-97, and 122-128 (HSFLSSS).

Belongs to the bacterial CoaD family. Homohexamer. Mg(2+) is required as a cofactor.

Its subcellular location is the cytoplasm. The catalysed reaction is (R)-4'-phosphopantetheine + ATP + H(+) = 3'-dephospho-CoA + diphosphate. It functions in the pathway cofactor biosynthesis; coenzyme A biosynthesis; CoA from (R)-pantothenate: step 4/5. In terms of biological role, reversibly transfers an adenylyl group from ATP to 4'-phosphopantetheine, yielding dephospho-CoA (dPCoA) and pyrophosphate. This chain is Phosphopantetheine adenylyltransferase, found in Prochlorococcus marinus (strain SARG / CCMP1375 / SS120).